The chain runs to 290 residues: Protein-lysine methyltransferase METTL21E (290 aa).

Residues W96, 124–126 (GAG), D145, W176, and A197 contribute to the S-adenosyl-L-methionine site.

Belongs to the methyltransferase superfamily. METTL21 family.

Its function is as follows. Protein-lysine methyltransferase. The protein is Protein-lysine methyltransferase METTL21E (METTL21E) of Bos taurus (Bovine).